The following is a 450-amino-acid chain: Probable glycylpeptide N-tetradecanoyltransferase (450 aa).

Positions 1 to 28 are disordered; it reads MSHGHSHDGAPCGGHHGDDGAGGSRPSV. Tetradecanoyl-CoA is bound by residues Gln-67, Phe-68, Trp-69, Phe-200, Leu-201, Cys-202, Val-203, Ser-209, Arg-211, Val-212, and Ala-213.

This sequence belongs to the NMT family.

It is found in the cytoplasm. It catalyses the reaction N-terminal glycyl-[protein] + tetradecanoyl-CoA = N-tetradecanoylglycyl-[protein] + CoA + H(+). Its function is as follows. Adds a myristoyl group to the N-terminal glycine residue of certain cellular proteins. This is Probable glycylpeptide N-tetradecanoyltransferase (nmt-1) from Caenorhabditis elegans.